A 210-amino-acid polypeptide reads, in one-letter code: Ribonuclease HII (210 aa).

In terms of domain architecture, RNase H type-2 spans 18 to 208 (YPVAGIDEAG…VNDIISQTKL (191 aa)). A divalent metal cation is bound by residues aspartate 24, glutamate 25, and aspartate 116.

Belongs to the RNase HII family. Requires Mn(2+) as cofactor. Mg(2+) serves as cofactor.

It is found in the cytoplasm. It catalyses the reaction Endonucleolytic cleavage to 5'-phosphomonoester.. Functionally, endonuclease that specifically degrades the RNA of RNA-DNA hybrids. The sequence is that of Ribonuclease HII from Endomicrobium trichonymphae.